We begin with the raw amino-acid sequence, 253 residues long: Discoidin-1 subunit A (253 aa).

S2 is modified (N-acetylserine). One can recognise an F5/8 type C domain in the interval 2-152; it reads STQGLVQLLA…ISLRCEFYTQ (151 aa). The Cell attachment site motif lies at 79–81; sequence RGD.

As to quaternary structure, tetramer of four different chains (A to D). Stalk cells.

It localises to the cytoplasm. Its function is as follows. Galactose- and N-acetylgalactosamine-binding lectin. May play a role in cell-substratum adhesion rather than in cell-cell adhesion. May be necessary for the maintenance of normal elongate morphology during aggregation. The protein is Discoidin-1 subunit A (dscA-1) of Dictyostelium discoideum (Social amoeba).